The following is a 121-amino-acid chain: Flagellar protein FliT (121 aa).

Residues 1–50 (MNHAPHLYFAWQQLVEKSQLMLRLATEEQWDELIASEMAYVNAVQEIAHL) form a required for homodimerization region. Positions 60–98 (MQEQLRPMLRLILDNESKVKQLLQIRMDELAKLVGQSSV) are fliD binding.

Belongs to the FliT family. As to quaternary structure, homodimer. Interacts with FliD and FlhC.

The protein resides in the cytoplasm. It localises to the cytosol. In terms of biological role, dual-function protein that regulates the transcription of class 2 flagellar operons and that also acts as an export chaperone for the filament-capping protein FliD. As a transcriptional regulator, acts as an anti-FlhDC factor; it directly binds FlhC, thus inhibiting the binding of the FlhC/FlhD complex to class 2 promoters, resulting in decreased expression of class 2 flagellar operons. As a chaperone, effects FliD transition to the membrane by preventing its premature polymerization, and by directing it to the export apparatus. The protein is Flagellar protein FliT of Escherichia coli O157:H7.